The chain runs to 336 residues: MSIMDERLLSGESAYEDADLEYSLRPQTLRQYIGQDKAKHNLEVFIEAAKMREETLDHVLLYGPPGLGKTTLANIIANEMGVNVRTTSGPAIERPGDLAAVLTSLQPGDVLFIDEIHRLHRSIEEVLYPAMEDFCLDIVIGKGPSARSVRLDLPPFTLVGATTRAGALSAPLRDRFGVLSRLEYYTVDQLSAIVERTGEVFEVEINSLAALEIARRARGTPRIANRLLRRVRDFAQVRGNGTVTMEITQMALELLQVDKLGLDHIDHKLLLGIIEKFRGGPVGLETVSATIGEESHTIEDVYEPYLLQIGFLQRTPRGRIVTPLAYEHFGMEMPKV.

Residues 4–185 form a large ATPase domain (RuvB-L) region; the sequence is MDERLLSGES…FGVLSRLEYY (182 aa). ATP is bound by residues Leu24, Arg25, Gly66, Lys69, Thr70, Thr71, 132 to 134, Arg175, Tyr185, and Arg222; that span reads EDF. Thr70 contributes to the Mg(2+) binding site. Positions 186 to 256 are small ATPAse domain (RuvB-S); that stretch reads TVDQLSAIVE…ITQMALELLQ (71 aa). The interval 259-336 is head domain (RuvB-H); it reads KLGLDHIDHK…EHFGMEMPKV (78 aa). 2 residues coordinate DNA: Arg314 and Arg319.

It belongs to the RuvB family. As to quaternary structure, homohexamer. Forms an RuvA(8)-RuvB(12)-Holliday junction (HJ) complex. HJ DNA is sandwiched between 2 RuvA tetramers; dsDNA enters through RuvA and exits via RuvB. An RuvB hexamer assembles on each DNA strand where it exits the tetramer. Each RuvB hexamer is contacted by two RuvA subunits (via domain III) on 2 adjacent RuvB subunits; this complex drives branch migration. In the full resolvosome a probable DNA-RuvA(4)-RuvB(12)-RuvC(2) complex forms which resolves the HJ.

The protein resides in the cytoplasm. It catalyses the reaction ATP + H2O = ADP + phosphate + H(+). The RuvA-RuvB-RuvC complex processes Holliday junction (HJ) DNA during genetic recombination and DNA repair, while the RuvA-RuvB complex plays an important role in the rescue of blocked DNA replication forks via replication fork reversal (RFR). RuvA specifically binds to HJ cruciform DNA, conferring on it an open structure. The RuvB hexamer acts as an ATP-dependent pump, pulling dsDNA into and through the RuvAB complex. RuvB forms 2 homohexamers on either side of HJ DNA bound by 1 or 2 RuvA tetramers; 4 subunits per hexamer contact DNA at a time. Coordinated motions by a converter formed by DNA-disengaged RuvB subunits stimulates ATP hydrolysis and nucleotide exchange. Immobilization of the converter enables RuvB to convert the ATP-contained energy into a lever motion, pulling 2 nucleotides of DNA out of the RuvA tetramer per ATP hydrolyzed, thus driving DNA branch migration. The RuvB motors rotate together with the DNA substrate, which together with the progressing nucleotide cycle form the mechanistic basis for DNA recombination by continuous HJ branch migration. Branch migration allows RuvC to scan DNA until it finds its consensus sequence, where it cleaves and resolves cruciform DNA. This chain is Holliday junction branch migration complex subunit RuvB, found in Bacillus thuringiensis (strain Al Hakam).